The chain runs to 155 residues: 6,7-dimethyl-8-ribityllumazine synthase (155 aa).

5-amino-6-(D-ribitylamino)uracil-binding positions include tryptophan 24, 58-60 (AFE), and 82-84 (AVI). 87–88 (GT) is a binding site for (2S)-2-hydroxy-3-oxobutyl phosphate. The active-site Proton donor is the histidine 90. Position 115 (phenylalanine 115) interacts with 5-amino-6-(D-ribitylamino)uracil. Residue arginine 129 coordinates (2S)-2-hydroxy-3-oxobutyl phosphate.

This sequence belongs to the DMRL synthase family. As to quaternary structure, forms an icosahedral capsid composed of 60 subunits, arranged as a dodecamer of pentamers.

The catalysed reaction is (2S)-2-hydroxy-3-oxobutyl phosphate + 5-amino-6-(D-ribitylamino)uracil = 6,7-dimethyl-8-(1-D-ribityl)lumazine + phosphate + 2 H2O + H(+). It participates in cofactor biosynthesis; riboflavin biosynthesis; riboflavin from 2-hydroxy-3-oxobutyl phosphate and 5-amino-6-(D-ribitylamino)uracil: step 1/2. In terms of biological role, catalyzes the formation of 6,7-dimethyl-8-ribityllumazine by condensation of 5-amino-6-(D-ribitylamino)uracil with 3,4-dihydroxy-2-butanone 4-phosphate. This is the penultimate step in the biosynthesis of riboflavin. This is 6,7-dimethyl-8-ribityllumazine synthase from Saccharophagus degradans (strain 2-40 / ATCC 43961 / DSM 17024).